The following is a 391-amino-acid chain: GTPase Obg (391 aa).

The region spanning Met1–Leu159 is the Obg domain. The OBG-type G domain occupies Ala160–Glu333. Residues Gly166–Ser173, Phe191–Ile195, Asp213–Gly216, Asn283–Asp286, and Ser314–Ala316 each bind GTP. Mg(2+) is bound by residues Ser173 and Thr193. A compositionally biased stretch (basic and acidic residues) spans Leu367–Asn377. Residues Leu367–Pro391 form a disordered region. Residues Asp378–Pro391 are compositionally biased toward acidic residues.

Belongs to the TRAFAC class OBG-HflX-like GTPase superfamily. OBG GTPase family. Monomer. Mg(2+) is required as a cofactor.

It is found in the cytoplasm. Functionally, an essential GTPase which binds GTP, GDP and possibly (p)ppGpp with moderate affinity, with high nucleotide exchange rates and a fairly low GTP hydrolysis rate. Plays a role in control of the cell cycle, stress response, ribosome biogenesis and in those bacteria that undergo differentiation, in morphogenesis control. The protein is GTPase Obg of Alcanivorax borkumensis (strain ATCC 700651 / DSM 11573 / NCIMB 13689 / SK2).